A 349-amino-acid chain; its full sequence is tRNA N6-adenosine threonylcarbamoyltransferase (349 aa).

Positions 111 and 115 each coordinate Fe cation. Residues 134–138 (LVSGG), D167, G180, D184, and N279 contribute to the substrate site. D307 contributes to the Fe cation binding site.

It belongs to the KAE1 / TsaD family. It depends on Fe(2+) as a cofactor.

Its subcellular location is the cytoplasm. It carries out the reaction L-threonylcarbamoyladenylate + adenosine(37) in tRNA = N(6)-L-threonylcarbamoyladenosine(37) in tRNA + AMP + H(+). Its function is as follows. Required for the formation of a threonylcarbamoyl group on adenosine at position 37 (t(6)A37) in tRNAs that read codons beginning with adenine. Is involved in the transfer of the threonylcarbamoyl moiety of threonylcarbamoyl-AMP (TC-AMP) to the N6 group of A37, together with TsaE and TsaB. TsaD likely plays a direct catalytic role in this reaction. This is tRNA N6-adenosine threonylcarbamoyltransferase from Nostoc punctiforme (strain ATCC 29133 / PCC 73102).